Consider the following 335-residue polypeptide: Probable E3 ubiquitin-protein ligase BAH1-like (335 aa).

The SPX domain occupies 1–163; sequence MKFGETFTEY…SSENGKNFKL (163 aa). Residues 231–280 form an RING-type zinc finger; the sequence is CAICLETVFNPYALKCGHIFCNSCACSAASVLIFQGIKAAPRHSKCPICR.

It belongs to the RING-type zinc finger family.

It catalyses the reaction S-ubiquitinyl-[E2 ubiquitin-conjugating enzyme]-L-cysteine + [acceptor protein]-L-lysine = [E2 ubiquitin-conjugating enzyme]-L-cysteine + N(6)-ubiquitinyl-[acceptor protein]-L-lysine.. The protein operates within protein modification; protein ubiquitination. This chain is Probable E3 ubiquitin-protein ligase BAH1-like (RF178), found in Arabidopsis thaliana (Mouse-ear cress).